The primary structure comprises 142 residues: Small ribosomal subunit protein bS6 (142 aa).

A disordered region spans residues 110–142; the sequence is NKKPSHAKEKHEKTEHAHSHHAEEAKSTESHSE.

The protein belongs to the bacterial ribosomal protein bS6 family.

Functionally, binds together with bS18 to 16S ribosomal RNA. The polypeptide is Small ribosomal subunit protein bS6 (Helicobacter pylori (strain G27)).